The following is a 2766-amino-acid chain: MPITQDNALLHLPLLYEWLQNSLREGGDSPEQRLCQAAIQKLQEYIQLNLAVDESTVPPDHSPPEMEICTVYLTKQLGDTETVGLSFGNIPVFGDYGEKRRGGKKRKTHQGPVLDVGCIWVTELRKNSPAGKSGKVRLRDEILSLNGQLMVGVDVTGASYLAEQCWNGGFIYLIMLRRFKQKAHVTYNGNSGNSSEPGETPTLELGDQTSKKGKRTRKFGVISRPSISKTPEDSKSSSGCDTADDPNSELENGADPELGNGHAFELENGPHSLKDVAGPHLERSEADSEVELRVPKTEAPLSDSNDKRRFSKTGKTDFQSSDCLAREEVGRIWKMELLKESDGLGIQVSGGRGSKRSPHAIVVTQVKEGGAAHRDGRLSLGDELLVINGHLLVGLSHEEAVAILRSATGMVQLVVASKMPGSEESQDVGSSEESKGNLESPKQGNCKTKLKSRLSGGVHRLESVEEYNELMVRNGDPRIRMLEVSRDGRKHSLPQLLDSTGTSQEYHIVKKSTRSLSTTHVESPWRLIRPSVISIIGLYKEKGKGLGFSIAGGRDCIRGQMGIFVKTIFPNGSAAEDGRLKEGDEILDVNGIPIKGLTFQEAIHTFKQIRSGLFVLTVRTKLLSPSLTPCSTPTHMSRSSSPSFNTNSGGTPAGGGQEEGGSSSLGRKAPGPKDRIVMEVTLNKEPRVGLGIGACCLALENSPPGIYIHSLAPGSVAKMESNLSRGDQILEVNSVNVRHAALSKVHAILSKCPPGPVRLVIGRHPNPKVSEQEMDEVIARSTYQESREANSSPGLGTPLKSPSLAKKDSLLSESELSQYFVHDGQGSLSDFVVAGSEDEDHPGSGYETSEDGSLLPVPSAHKARANSLVTLGSQRTSGLLHKQVTVARQASLPGSPQVLRNPLLRQRRVRCYDSNGGSDDEDFDGEGDCISLPGVLPGPGKPLVEDDTRPALTTSSKSIDVNKQEERLQKPLVSKACSVPLLGSSLDSEHSILNGAGGTPPKVASLPGSGETPKNGPRGSGRKEMSGSRSSPKLEYRVPTDTQSPRSPENHTSPPQKSENLVSRHKPVARISPHYKRSDAEEAPGGTANGPCAQDLKVQASPVKDPVTSRQPGGTAEKELRGNPTPGDSSVPTNCGPASTPCHPNIGLPTENPQGAAPECGPHPGTGWDGSSEHLCSPGKSREVHPDSSETPTVAEQVHQPESLSQPVSPRTSEPESQGISKMKPPSQRCVSPREKASTPPDSSRAWAAPGDSSPSTRRIAVPMSTGAAPATAIPQASLVSQERSRGLSGPSKGLGTKELCIPKSLKDGALLEDTAPASGKMSHASSPSGPVATERTLSGSPENPVTDIDNFIEEASEARLSQSPQKADCRAHGDTFESQPPGGAGSSSSHHAQMVRSDQTSSPRKTGGTGSPPPQQWALQPSVLDSIHPDKHLAVNKTFLNNYSRNFSNFHEDSISLSGPGGSSEPSPSSMYGNAEDSSSDPESLAEDPGAAARNNWSPPLSPESSPKEGSSESEDERIEICSTDGCPGTPVTAPPPTQVALCPVLPVQQRAVCKPVGDICERACFVPGASRTSIPDSSQPFSFLDVSSEEPETWASINASQNHMPVCTEGIMDVTSTSSNMGDSQSSQMTRHCRNAPFVLGNPDMVNDLGRDLLDEGAPKEGAAAASVMRSVFALGAEGPKNGEAVLADLHIAERGNLEDLLQKPKTISRRPILTWFKEINKDSQGSHLRSTSEKEQSSMLALGPGSKANMVNTGHRKGVTVPKSPPSRQKSQENKDLPPKSPVETLGNCQKPKCSPKLKRLNSKGKASPEVPVAISTKGSRNDHRKTLPSPQASHKMFSKAVSHRLHIADQEEPKNTAGDTPKPPQCVPESKPPQAALGSLRTSASDTSIRTFTSPLTSPKLLPEQGANSRFHMAVYLESDTSCPTTSRSPRSGPEGKAPHANSGSASPPASRASLALAGIRQSKQFTPGRADLLVSEATQPQGICEKGAEKKVSDPPQRTNQLKIVEISSERVPKNACGDRPPESDRKGGFLTQNNCQEKSAIRLRQSEESSPEHTPFPPSQASQVEREIRWSFSMAKPATSSSSSLQLPAKLPESFQGKSSQMPASVGVPKNGVPIGLAGEESPYFTPRPATRTYSMPAQFSSHFGREGPSPHSPSHSPQDPQVPAMGGKLSEKTAKGVTNGQGVYSVKPLLETSKNLSPVDGRDVSADPETSCLIPDKVKVTRRQYCCEQSWPHESTSFFSVKQRIKSFENLANSDRPTAKCATSPFLSVSSKPPINRRSSGSIPSGSPSDMTSRSLRRSLSSCSESQSEASSLLPQMTKSPSSMTLTVSRQNPPDTSNKGPSPDPKKSLVPVGIPTSTVSPASPSKRNKSSVRHAQPSPVSRSKLQERRTLSMPDLDKLCNGEDDSASPGAVLFKTQLEITPRRSKGSQATSPAGSPARGHADFNGSTFLSCPMNGGTRAYTKGNSPPASEPAIATGSREEGESVWATPSGKSWSVSLDRLLASVGNQQRLQGILSLVGSKSPILTLIQEAKAQSETKEDICFIVLNKKEGSGLGFSVAGGADVEPKSVMVHRVFSQGVASQEGTVSRGDFLLSVNGTSLAGLAHSEVTKVLHQAELHKHALMIIKKGNDQPGPSFKQEPPSANGKGPFPRRTLPLEPGAGRNGAAHDALCVEVLKTSAGLGLSLDGGKSSVSGEGPLVIKRVYKGGAAERAGTIEAGDEILAINGKPLVGLVHFDAWNIMKSVPEGPVQLVIRKHRDS.

The 93-residue stretch at 85-177 folds into the PDZ 1 domain; sequence LSFGNIPVFG…GGFIYLIMLR (93 aa). Disordered stretches follow at residues 189-315 and 419-452; these read GNSG…KTGK and MPGS…KLKS. Positions 242-254 are enriched in acidic residues; sequence TADDPNSELENGA. Over residues 280–296 the composition is skewed to basic and acidic residues; the sequence is HLERSEADSEVELRVPK. One can recognise a PDZ 2 domain in the interval 334–419; sequence KMELLKESDG…MVQLVVASKM (86 aa). Ser-517 carries the phosphoserine modification. The PDZ 3 domain occupies 535-621; the sequence is IIGLYKEKGK…GLFVLTVRTK (87 aa). The span at 627-636 shows a compositional bias: polar residues; the sequence is LTPCSTPTHM. The tract at residues 627-673 is disordered; sequence LTPCSTPTHMSRSSSPSFNTNSGGTPAGGGQEEGGSSSLGRKAPGPK. Low complexity predominate over residues 637–650; it reads SRSSSPSFNTNSGG. Residues 679 to 764 form the PDZ 4 domain; sequence EVTLNKEPRV…GPVRLVIGRH (86 aa). Polar residues predominate over residues 783–794; it reads YQESREANSSPG. 2 disordered regions span residues 783 to 803 and 834 to 853; these read YQES…KSPS and AGSE…EDGS. Ser-891 and Ser-895 each carry phosphoserine. Disordered regions lie at residues 915-966, 990-1425, 1456-1531, 1725-1909, 1924-1967, 2015-2070, 2146-2174, 2262-2397, 2424-2450, and 2465-2496; these read NGGS…KQEE, HSIL…PSVL, ISLS…CPGT, DSQG…LPEQ, DTSC…IRQS, ERVP…ASQV, FSSH…AMGG, DRPT…ERRT, QLEI…GHAD, and TRAY…WATP. The segment covering 918-927 has biased composition (acidic residues); it reads SDDEDFDGEG. The span at 1021–1038 shows a compositional bias: basic and acidic residues; that stretch reads GRKEMSGSRSSPKLEYRV. 3 stretches are compositionally biased toward polar residues: residues 1040–1061, 1126–1137, and 1189–1220; these read TDTQ…SENL, PGDSSVPTNCGP, and SETP…SQGI. Composition is skewed to low complexity over residues 1379–1393 and 1456–1471; these read SQPP…SHHA and ISLS…SPSS. Ser-1767 carries the phosphoserine modification. Over residues 1797–1806 the composition is skewed to basic residues; it reads CSPKLKRLNS. Residues 1884-1901 show a composition bias toward polar residues; the sequence is LRTSASDTSIRTFTSPLT. Low complexity-rich tracts occupy residues 1924-1937 and 1947-1963; these read DTSC…PRSG and SGSA…ALAG. 2 stretches are compositionally biased toward low complexity: residues 2280-2296 and 2305-2321; these read PPIN…GSPS and RSLS…SSLL. Composition is skewed to polar residues over residues 2322–2347 and 2362–2372; these read PQMT…SNKG and PTSTVSPASPS. The 85-residue stretch at 2550–2634 folds into the PDZ 5 domain; sequence FIVLNKKEGS…HKHALMIIKK (85 aa). Residues 2635-2667 form a disordered region; it reads GNDQPGPSFKQEPPSANGKGPFPRRTLPLEPGA. Residues 2678 to 2763 form the PDZ 6 domain; that stretch reads CVEVLKTSAG…GPVQLVIRKH (86 aa).

Interacts with SCN10A, CTNND2 and PKP4. A secreted form is produced by caspase-mediated proteolytic cleavage. Expressed in the heart, liver, brain, spleen, lung, kidney, testis and skeletal muscle.

Its subcellular location is the nucleus. It is found in the cytoplasm. It localises to the endoplasmic reticulum. The protein resides in the cell junction. The protein localises to the secreted. In Rattus norvegicus (Rat), this protein is PDZ domain-containing protein 2 (Pdzd2).